A 281-amino-acid polypeptide reads, in one-letter code: Protein phosphatase 2C homolog 1 (281 aa).

The 262-residue stretch at 20-281 folds into the PPM-type phosphatase domain; that stretch reads RVGVAENKNS…DNVTVMVVFL (262 aa). Mn(2+) contacts are provided by Asp58, Gly59, Asp233, and Asp272.

This sequence belongs to the PP2C family. Interacts with NBP2 and PBS2. Mg(2+) is required as a cofactor. The cofactor is Mn(2+).

Its subcellular location is the peroxisome. It catalyses the reaction O-phospho-L-seryl-[protein] + H2O = L-seryl-[protein] + phosphate. It carries out the reaction O-phospho-L-threonyl-[protein] + H2O = L-threonyl-[protein] + phosphate. In terms of biological role, serine and threonine phosphatase. Involved in tRNA splicing and cell separation. This Saccharomyces cerevisiae (strain ATCC 204508 / S288c) (Baker's yeast) protein is Protein phosphatase 2C homolog 1 (PTC1).